An 874-amino-acid polypeptide reads, in one-letter code: MYQTTAALRSAFLEFFRSNGHQVVDSSSLVPGNDPTLLFTNAGMNQFKDVFLGMDKRSYTRATTAQRCVRAGGKHNDLDNVGYTARHHTFFEMLGNFSFGDYFKEDAIRFGWTFLTEVLKLPKERLCVTVYQTDDEAFEIWNKKIGVAAENIIRIGDNKGAPYASDNFWQMGDTGPCGPCTEIFYDHGDHIWGGRPGSPEEDGDRFIEIWNIVFMQYNRQASGEMLPLPKPSVDTGMGIERIAAIMQGVHSNYEIDIFRALIAKAAEIIGVTDLSNKSLRVIADHIRSCAFLVADGVMPSNEGRGYVLRRIIRRAVRHGNKLGATEAFFYKLVPTLIEVMGDAAKGLADTQVIVEKALKAEEEQFARTLERGLGILDSALNELQGDTLDGETVFKLYDTYGFPVDLTADVCRERNIIVDEAGFEAAMAEQRSRAQAAGNFGADYNAALKIDAETAFCGYSELTGNAKVTALYLNGESVPAINAGDDAVVVLDVTPFYAESGGQVGDKGVLVAQGIEFAVSDTQKFGQASGHKGTLTAGSLSVGQVLEAKVDKKLRHRTQLNHSVTHLLHAALRQVLGTHVTQKGSLVDPERLRFDFSHFEAVKPAELKQVEELVNTQIRRNHELKVAEMAIDEAKEKGAMALFGEKYDAQVRVVTMGDFSIELCGGTHVGRTGDIGLFKITSEGGIAAGVRRIEAVTGAAAMAYVAQQQAQLEEAAALLKGDTQSVVAKLKVQLDKMKQLEKDMQQLKDKLAAAASADLAGDAVVVNGVNVLIKKLEGVEAGALRGLQDELKQKLKSAVILLGVAQEGKVNLIAGVSNDLVGKVKAGELVAMVAAQVGGKGGGRPDMAQAGGSQPENLDAALSQVLPWITERLA.

Residues His562, His566, Cys664, and His668 each contribute to the Zn(2+) site.

Belongs to the class-II aminoacyl-tRNA synthetase family. It depends on Zn(2+) as a cofactor.

Its subcellular location is the cytoplasm. It catalyses the reaction tRNA(Ala) + L-alanine + ATP = L-alanyl-tRNA(Ala) + AMP + diphosphate. Functionally, catalyzes the attachment of alanine to tRNA(Ala) in a two-step reaction: alanine is first activated by ATP to form Ala-AMP and then transferred to the acceptor end of tRNA(Ala). Also edits incorrectly charged Ser-tRNA(Ala) and Gly-tRNA(Ala) via its editing domain. The polypeptide is Alanine--tRNA ligase (Shewanella sp. (strain MR-7)).